We begin with the raw amino-acid sequence, 89 residues long: UPF0223 protein BAMEG_4214 (89 aa).

Belongs to the UPF0223 family.

This is UPF0223 protein BAMEG_4214 from Bacillus anthracis (strain CDC 684 / NRRL 3495).